Here is an 869-residue protein sequence, read N- to C-terminus: Structure-specific endonuclease subunit SLX4 (869 aa).

A compositionally biased stretch (low complexity) spans 40 to 59 (SPLSLPSPTSLLDFLSTSTS). Disordered stretches follow at residues 40–79 (SPLS…EVLD), 92–116 (NRVV…ESPG), 165–199 (KANQ…INDL), 293–323 (GLSD…NPPK), 351–388 (TLLS…KKNE), 418–437 (ANGH…HISN), and 630–774 (KTSN…ASET). Positions 63 to 79 (ARSDTDGDKTQGKEVLD) are enriched in basic and acidic residues. 2 stretches are compositionally biased toward polar residues: residues 165–174 (KANQTVSLQP) and 294–311 (LSDS…SATS). Basic residues predominate over residues 312 to 322 (KPRRVKAKNPP). 2 stretches are compositionally biased toward polar residues: residues 647 to 657 (VDESTQGQSLG) and 664 to 673 (SIPQTATTQV). The span at 688–700 (VPVPSRRSTSTSK) shows a compositional bias: low complexity. Positions 765 to 774 (IPSTGTASET) are enriched in polar residues.

The protein belongs to the SLX4 family. In terms of assembly, forms a heterodimer with SLX1. Post-translationally, phosphorylated in response to DNA damage.

It localises to the nucleus. In terms of biological role, regulatory subunit of the SLX1-SLX4 structure-specific endonuclease that resolves DNA secondary structures generated during DNA repair and recombination. Has endonuclease activity towards branched DNA substrates, introducing single-strand cuts in duplex DNA close to junctions with ss-DNA. The protein is Structure-specific endonuclease subunit SLX4 of Paracoccidioides brasiliensis (strain Pb18).